A 467-amino-acid polypeptide reads, in one-letter code: Chromosomal replication initiator protein DnaA (467 aa).

The domain I, interacts with DnaA modulators stretch occupies residues 1–90; the sequence is MSLSLWQQCL…KPVTQTPQAA (90 aa). The interval 91 to 130 is domain II; it reads VTSNVAAPALVAQTQPQRAAPSTRSGWDNVPAPAEPTYRS. The tract at residues 131–347 is domain III, AAA+ region; that stretch reads NVNVKHTFDN…GALNRVIANA (217 aa). ATP is bound by residues glycine 175, glycine 177, lysine 178, and threonine 179. Residues 348-467 are domain IV, binds dsDNA; that stretch reads NFTGRAITID…FSNLIRTLSS (120 aa).

It belongs to the DnaA family. As to quaternary structure, oligomerizes as a right-handed, spiral filament on DNA at oriC.

It is found in the cytoplasm. In terms of biological role, plays an essential role in the initiation and regulation of chromosomal replication. ATP-DnaA binds to the origin of replication (oriC) to initiate formation of the DNA replication initiation complex once per cell cycle. Binds the DnaA box (a 9 base pair repeat at the origin) and separates the double-stranded (ds)DNA. Forms a right-handed helical filament on oriC DNA; dsDNA binds to the exterior of the filament while single-stranded (ss)DNA is stabiized in the filament's interior. The ATP-DnaA-oriC complex binds and stabilizes one strand of the AT-rich DNA unwinding element (DUE), permitting loading of DNA polymerase. After initiation quickly degrades to an ADP-DnaA complex that is not apt for DNA replication. Binds acidic phospholipids. The protein is Chromosomal replication initiator protein DnaA of Shigella dysenteriae serotype 1 (strain Sd197).